The chain runs to 222 residues: Thiol:disulfide interchange protein DsbL (222 aa).

A signal peptide spans 1–27 (MSAKWINSIFKSVVLTAALALPFTASA). A Thioredoxin domain is found at 28–221 (FTEGTDYMVL…MAQLVRELAT (194 aa)). Cysteines 56 and 59 form a disulfide.

This sequence belongs to the thioredoxin family. DsbL subfamily. In terms of assembly, interacts with DsbI.

It localises to the periplasm. In terms of biological role, involved in disulfide-bond formation. Acts by transferring its disulfide bond to other proteins. Part of a redox system composed of DsbI and DsbL that mediates formation of an essential disulfide bond in AssT. The polypeptide is Thiol:disulfide interchange protein DsbL (Lelliottia amnigena (Enterobacter amnigenus)).